A 248-amino-acid polypeptide reads, in one-letter code: Exosome complex component Rrp41 (248 aa).

The protein belongs to the RNase PH family. Rrp41 subfamily. In terms of assembly, component of the archaeal exosome complex. Forms a hexameric ring-like arrangement composed of 3 Rrp41-Rrp42 heterodimers. The hexameric ring associates with a trimer of Rrp4 and/or Csl4 subunits.

It is found in the cytoplasm. In terms of biological role, catalytic component of the exosome, which is a complex involved in RNA degradation. Has 3'-&gt;5' exoribonuclease activity. Can also synthesize heteromeric RNA-tails. The protein is Exosome complex component Rrp41 of Thermoplasma volcanium (strain ATCC 51530 / DSM 4299 / JCM 9571 / NBRC 15438 / GSS1).